The primary structure comprises 1247 residues: Protein jagged-2 (1247 aa).

The first 23 residues, 1–23 (MRARGWGRLPRRLLLLLVLCVQA), serve as a signal peptide directing secretion. Over 24–1082 (TRPMGYFELQ…ETVVMGGSST (1059 aa)) the chain is Extracellular. Asparagine 153 is a glycosylation site (N-linked (GlcNAc...) asparagine). Residues 196–240 (VRCDENYYSATCNKFCRPRNDFFGHYTCDQYGNKACMDGWMGKEC) form the DSL domain. 42 disulfides stabilise this stretch: cysteine 198–cysteine 207, cysteine 211–cysteine 223, cysteine 231–cysteine 240, cysteine 245–cysteine 256, cysteine 249–cysteine 262, cysteine 264–cysteine 273, cysteine 276–cysteine 287, cysteine 282–cysteine 293, cysteine 295–cysteine 304, cysteine 311–cysteine 323, cysteine 317–cysteine 333, cysteine 335–cysteine 344, cysteine 351–cysteine 362, cysteine 356–cysteine 371, cysteine 373–cysteine 382, cysteine 389–cysteine 400, cysteine 394–cysteine 409, cysteine 411–cysteine 420, cysteine 427–cysteine 438, cysteine 432–cysteine 447, cysteine 449–cysteine 458, cysteine 465–cysteine 475, cysteine 469–cysteine 484, cysteine 486–cysteine 495, cysteine 502–cysteine 513, cysteine 507–cysteine 522, cysteine 524–cysteine 533, cysteine 540–cysteine 551, cysteine 545–cysteine 560, cysteine 562–cysteine 571, cysteine 589–cysteine 612, cysteine 606–cysteine 622, cysteine 624–cysteine 633, cysteine 640–cysteine 651, cysteine 645–cysteine 660, cysteine 662–cysteine 671, cysteine 678–cysteine 689, cysteine 683–cysteine 698, cysteine 700–cysteine 709, cysteine 716–cysteine 727, cysteine 721–cysteine 736, and cysteine 738–cysteine 747. Positions 241–274 (KEAVCKQGCNLLHGGCTVPGECRCSYGWQGKFCD) constitute an EGF-like 1 domain. Residues 275 to 305 (ECVPYPGCVHGSCVEPWHCDCETNWGGLLCD) enclose the EGF-like 2; atypical domain. EGF-like domains follow at residues 307 to 345 (DLNY…KNCE) and 347 to 383 (AEHA…PTCA). The EGF-like 5; calcium-binding domain occupies 385-421 (DIDECASNPCAAGGTCVDQVDGFECICPEQWVGATCQ). Residues 423-459 (DANECEGKPCLNAFSCKNLIGGYYCDCLPGWKGINCQ) enclose the EGF-like 6; calcium-binding domain. Residues 461 to 496 (NINDCHGQCQHGGTCKDLVNGYQCVCPRGFGGRHCE) form the EGF-like 7; calcium-binding domain. 2 consecutive EGF-like domains span residues 498-534 (EYDK…LHCE) and 536-572 (DMDL…KNCS). Asparagine 570 carries an N-linked (GlcNAc...) asparagine glycan. Positions 574 to 634 (PRDTCPGGAC…DSGFTGTYCH (61 aa)) constitute an EGF-like 10; atypical domain. Asparagine 619 carries an N-linked (GlcNAc...) asparagine glycan. Residues 636 to 672 (NIDDCMGQPCRNGGTCIDEVDSFRCFCPSGWEGELCD) form the EGF-like 11; calcium-binding domain. The EGF-like 12; calcium-binding domain occupies 674 to 710 (NPNDCLPDPCHSRGRCYDLVNDFYCACDDGWKGKTCH). 2 EGF-like domains span residues 712-748 (REFQ…STCT) and 751-787 (KNSS…RTCT). The N-linked (GlcNAc...) asparagine glycan is linked to asparagine 752. 9 cysteine pairs are disulfide-bonded: cysteine 755–cysteine 766, cysteine 760–cysteine 775, cysteine 777–cysteine 786, cysteine 793–cysteine 804, cysteine 798–cysteine 813, cysteine 815–cysteine 824, cysteine 831–cysteine 842, cysteine 836–cysteine 851, and cysteine 853–cysteine 862. In terms of domain architecture, EGF-like 15; calcium-binding spans 789-825 (NTNDCNPLPCYNGGICVDGVNWFRCECAPGFAGPDCR). The region spanning 827-863 (NIDECQSSPCAYGATCVDEINGYRCSCPPGRSGPRCQ) is the EGF-like 16; calcium-binding domain. Asparagine 1060 carries N-linked (GlcNAc...) asparagine glycosylation. The chain crosses the membrane as a helical span at residues 1083–1103 (GLLVPVLCSVFSVLWLACVVI). The Cytoplasmic portion of the chain corresponds to 1104–1247 (CVWWTRKRRK…TKDVRRAGRE (144 aa)). 3 stretches are compositionally biased toward basic and acidic residues: residues 1115-1125 (RERSRLPRDES), 1192-1212 (LSRG…KFTK), and 1230-1247 (VDNR…AGRE). Disordered regions lie at residues 1115 to 1148 (RERS…GSGL) and 1167 to 1247 (PRRA…AGRE). Residue serine 1125 is modified to Phosphoserine.

Found to be highest in fetal thymus, epidermis, foregut dorsal root ganglia and inner ear. In 2-weeK-old mice, abundant in heart, lung, thymus, skeletal muscle, brain and testis. Expression overlaps partially with Notch1 expression.

It localises to the membrane. Functionally, putative Notch ligand involved in the mediation of Notch signaling. Plays an essential role during limb, craniofacial and thymic development. May be involved in myogenesis and in the development of peripheral and central nervous systems. This is Protein jagged-2 (Jag2) from Mus musculus (Mouse).